The chain runs to 268 residues: Ribosomal RNA small subunit methyltransferase A (268 aa).

Residues Asn18, Leu20, Gly45, Glu66, Asp91, and Asn112 each contribute to the S-adenosyl-L-methionine site.

This sequence belongs to the class I-like SAM-binding methyltransferase superfamily. rRNA adenine N(6)-methyltransferase family. RsmA subfamily.

Its subcellular location is the cytoplasm. The catalysed reaction is adenosine(1518)/adenosine(1519) in 16S rRNA + 4 S-adenosyl-L-methionine = N(6)-dimethyladenosine(1518)/N(6)-dimethyladenosine(1519) in 16S rRNA + 4 S-adenosyl-L-homocysteine + 4 H(+). Functionally, specifically dimethylates two adjacent adenosines (A1518 and A1519) in the loop of a conserved hairpin near the 3'-end of 16S rRNA in the 30S particle. May play a critical role in biogenesis of 30S subunits. The chain is Ribosomal RNA small subunit methyltransferase A from Shewanella sp. (strain MR-7).